Reading from the N-terminus, the 275-residue chain is Undecaprenyl-diphosphatase (275 aa).

8 helical membrane-spanning segments follow: residues 4 to 24, 54 to 74, 92 to 112, 123 to 143, 154 to 174, 194 to 214, 228 to 248, and 255 to 275; these read IYGL…EFLP, LGSI…LFGL, LHLY…LMFY, YVMY…LIHD, ISYL…LPGF, AFEF…ILDL, MFII…KLFW, and SFIP…LILI.

This sequence belongs to the UppP family.

The protein localises to the cell membrane. The enzyme catalyses di-trans,octa-cis-undecaprenyl diphosphate + H2O = di-trans,octa-cis-undecaprenyl phosphate + phosphate + H(+). Its function is as follows. Catalyzes the dephosphorylation of undecaprenyl diphosphate (UPP). Confers resistance to bacitracin. This Baumannia cicadellinicola subsp. Homalodisca coagulata protein is Undecaprenyl-diphosphatase.